The chain runs to 91 residues: CLAVATA3/ESR (CLE)-related protein 27 (91 aa).

An N-terminal signal peptide occupies residues 1-35 (MTHAREWRSSLTTTLLMVILLSYMLHLFCVYSRVG). 2 positions are modified to hydroxyproline: Pro-83 and Pro-86. Pro-86 carries O-linked (Ara...) hydroxyproline glycosylation.

Belongs to the CLV3/ESR signal peptide family. In terms of processing, the O-glycosylation (arabinosylation) of the hydroxyproline Pro-86 enhances binding affinity of the CLE27p peptide for its receptor. In terms of tissue distribution, mostly expressed in apex, and, to a lower extent, in roots, leaves, flowers and siliques.

The protein localises to the secreted. Its subcellular location is the extracellular space. In terms of biological role, extracellular signal peptide that regulates cell fate. Represses root apical meristem maintenance. In Arabidopsis thaliana (Mouse-ear cress), this protein is CLAVATA3/ESR (CLE)-related protein 27.